The primary structure comprises 104 residues: Secretoglobin family 3A member 1 (104 aa).

The N-terminal stretch at 1–21 (MKLTTTFLVLCVALLSDSGVA) is a signal peptide.

This sequence belongs to the secretoglobin family. UGRP subfamily. As to quaternary structure, homodimer; disulfide-linked. In terms of tissue distribution, highly expressed in lung, where it localizes to epithelial cells lining the trachea and bronchi. Expression in lung is mainly restricted to bronchi, submucosal glands of the trachea, and tracheal epithelium, with little expression in terminal bronchioles. Expressed in uterus where it localizes to epithelial cells of the uterine glands. Also detected in heart, stomach and small intestine.

It localises to the secreted. Secreted cytokine-like protein. Inhibits cell growth in vitro. This Mus musculus (Mouse) protein is Secretoglobin family 3A member 1 (Scgb3a1).